The sequence spans 272 residues: Undecaprenyl-diphosphatase (272 aa).

The next 7 helical transmembrane spans lie at 22–42, 45–65, 92–112, 118–138, 189–209, 228–248, and 251–271; these read FLPV…GFTG, AETF…VVFW, SHII…HDVI, PQSV…AEIL, YTAS…ASGL, VGFV…LALI, and ISFI…YWVF.

This sequence belongs to the UppP family.

The protein resides in the cell inner membrane. It carries out the reaction di-trans,octa-cis-undecaprenyl diphosphate + H2O = di-trans,octa-cis-undecaprenyl phosphate + phosphate + H(+). In terms of biological role, catalyzes the dephosphorylation of undecaprenyl diphosphate (UPP). Confers resistance to bacitracin. This Photorhabdus laumondii subsp. laumondii (strain DSM 15139 / CIP 105565 / TT01) (Photorhabdus luminescens subsp. laumondii) protein is Undecaprenyl-diphosphatase.